The sequence spans 177 residues: Bifunctional protein PyrR (177 aa).

The PRPP-binding motif lies at 101 to 113 (IILIDDVLYTGRT).

This sequence belongs to the purine/pyrimidine phosphoribosyltransferase family. PyrR subfamily.

The catalysed reaction is UMP + diphosphate = 5-phospho-alpha-D-ribose 1-diphosphate + uracil. In terms of biological role, regulates the transcription of the pyrimidine nucleotide (pyr) operon in response to exogenous pyrimidines. Its function is as follows. Also displays a weak uracil phosphoribosyltransferase activity which is not physiologically significant. The chain is Bifunctional protein PyrR from Endomicrobium trichonymphae.